Consider the following 177-residue polypeptide: MAEITTIARPYAKAAFEFALEQKAVESWAEMLNFAALVSENETMQPLLSGSVASGKLAELFIGVCGEQINEQAQNLLKVMAENGRLVVLPAVAQQFVELQREYAKEVEAQIVSATELTSEQLQALSVSLEKRLARKVKLNCSIDTSLIAGVIITAGDLVIDGSVRGKVSRLSDTLQS.

Belongs to the ATPase delta chain family. As to quaternary structure, F-type ATPases have 2 components, F(1) - the catalytic core - and F(0) - the membrane proton channel. F(1) has five subunits: alpha(3), beta(3), gamma(1), delta(1), epsilon(1). F(0) has three main subunits: a(1), b(2) and c(10-14). The alpha and beta chains form an alternating ring which encloses part of the gamma chain. F(1) is attached to F(0) by a central stalk formed by the gamma and epsilon chains, while a peripheral stalk is formed by the delta and b chains.

It localises to the cell inner membrane. Functionally, f(1)F(0) ATP synthase produces ATP from ADP in the presence of a proton or sodium gradient. F-type ATPases consist of two structural domains, F(1) containing the extramembraneous catalytic core and F(0) containing the membrane proton channel, linked together by a central stalk and a peripheral stalk. During catalysis, ATP synthesis in the catalytic domain of F(1) is coupled via a rotary mechanism of the central stalk subunits to proton translocation. In terms of biological role, this protein is part of the stalk that links CF(0) to CF(1). It either transmits conformational changes from CF(0) to CF(1) or is implicated in proton conduction. This is ATP synthase subunit delta from Shewanella halifaxensis (strain HAW-EB4).